We begin with the raw amino-acid sequence, 137 residues long: Nucleoside diphosphate kinase (137 aa).

ATP contacts are provided by Lys9, Phe57, Arg85, Thr91, Arg102, and Asn112. Residue His115 is the Pros-phosphohistidine intermediate of the active site.

The protein belongs to the NDK family. As to quaternary structure, homotetramer. The cofactor is Mg(2+).

The protein resides in the cytoplasm. The enzyme catalyses a 2'-deoxyribonucleoside 5'-diphosphate + ATP = a 2'-deoxyribonucleoside 5'-triphosphate + ADP. It catalyses the reaction a ribonucleoside 5'-diphosphate + ATP = a ribonucleoside 5'-triphosphate + ADP. In terms of biological role, major role in the synthesis of nucleoside triphosphates other than ATP. The ATP gamma phosphate is transferred to the NDP beta phosphate via a ping-pong mechanism, using a phosphorylated active-site intermediate. In Campylobacter concisus (strain 13826), this protein is Nucleoside diphosphate kinase.